The primary structure comprises 276 residues: 2-dehydro-3-deoxyphosphooctonate aldolase (276 aa).

It belongs to the KdsA family.

The protein resides in the cytoplasm. It carries out the reaction D-arabinose 5-phosphate + phosphoenolpyruvate + H2O = 3-deoxy-alpha-D-manno-2-octulosonate-8-phosphate + phosphate. It participates in carbohydrate biosynthesis; 3-deoxy-D-manno-octulosonate biosynthesis; 3-deoxy-D-manno-octulosonate from D-ribulose 5-phosphate: step 2/3. The protein operates within bacterial outer membrane biogenesis; lipopolysaccharide biosynthesis. The chain is 2-dehydro-3-deoxyphosphooctonate aldolase from Helicobacter acinonychis (strain Sheeba).